We begin with the raw amino-acid sequence, 963 residues long: IQ motif and SEC7 domain-containing protein 1 (963 aa).

The interval 21–88 (SGVEGEAPSS…TRRPKLQHST (68 aa)) is disordered. Residues 29–38 (SSETGTSLDS) are compositionally biased toward polar residues. 3 positions are modified to phosphoserine: S89, S105, and S107. The IQ domain maps to 134-163 (TRHAARTIQTAFRQYQMNKNFERLRSSMSE). 3 positions are modified to phosphoserine: S180, S249, and S253. 2 disordered regions span residues 312-332 (LSPP…ESDL) and 349-513 (KEDK…RNSW). 2 stretches are compositionally biased toward basic and acidic residues: residues 366-376 (ERQEQRLRVEH) and 430-446 (LPRE…RPLD). Residues 471–489 (DSINSTSNSNDTINCSSES) show a composition bias toward low complexity. Phosphoserine is present on residues S512 and S515. One can recognise an SEC7 domain in the interval 517-710 (AFSNDVIRKR…MGIYERIRKR (194 aa)). A PH domain is found at 774–866 (HQREIFLFND…LRESIAEVQE (93 aa)). The stretch at 848–879 (QDRKKFTDDLRESIAEVQEMEKHRIESELEKQ) forms a coiled coil. S892 is modified (phosphoserine). At Y911 the chain carries Phosphotyrosine. A disordered region spans residues 922–947 (LSSSLRDLSEAGKRGRRSSAGSLESN). Phosphoserine is present on residues S924 and S925.

Belongs to the BRAG family. In terms of assembly, interacts with ARF1 and ARF6. Interacts with GRIA2; the interaction is required for ARF6 activation. As to expression, expressed in brain, ovary, heart, lung, liver, kidney and leukocytes. Moderate expression was also detected in lung, skeletal muscle, placenta, small intestine, pancreas, spleen and testis.

The protein localises to the cytoplasm. It localises to the nucleus. It is found in the postsynaptic density. The protein resides in the cytoplasmic vesicle. Its subcellular location is the secretory vesicle. The protein localises to the synaptic vesicle. In terms of biological role, guanine nucleotide exchange factor for ARF1 and ARF6. Guanine nucleotide exchange factor activity is enhanced by lipid binding. Accelerates GTP binding by ARFs of all three classes. Guanine nucleotide exchange protein for ARF6, mediating internalization of beta-1 integrin. Involved in neuronal development. In neurons, plays a role in the control of vesicle formation by endocytoc cargo. Upon long term depression, interacts with GRIA2 and mediates the activation of ARF6 to internalize synaptic AMPAR receptors. This is IQ motif and SEC7 domain-containing protein 1 from Homo sapiens (Human).